A 226-amino-acid polypeptide reads, in one-letter code: PKHD-type hydroxylase Bind_0236 (226 aa).

Residues 78-178 (TIFPPLFNRY…RIASFFWIQS (101 aa)) enclose the Fe2OG dioxygenase domain. Fe cation is bound by residues H96, D98, and H159. R169 provides a ligand contact to 2-oxoglutarate.

The cofactor is Fe(2+). It depends on L-ascorbate as a cofactor.

The protein is PKHD-type hydroxylase Bind_0236 of Beijerinckia indica subsp. indica (strain ATCC 9039 / DSM 1715 / NCIMB 8712).